A 151-amino-acid polypeptide reads, in one-letter code: Actin-depolymerizing factor 10 (151 aa).

An ADF-H domain is found at 15 to 149; sequence PAWIEVPEKS…DLEVLRGRAN (135 aa).

Belongs to the actin-binding proteins ADF family.

Its function is as follows. Actin-depolymerizing protein. Severs actin filaments (F-actin) and binds to actin monomers. In Oryza sativa subsp. japonica (Rice), this protein is Actin-depolymerizing factor 10 (ADF10).